The chain runs to 423 residues: Large ribosomal subunit protein mL37 (423 aa).

The N-terminal 29 residues, 1–29 (MALASGPAMRALAGSARLGLGGYGAPKRG), are a transit peptide targeting the mitochondrion.

The protein belongs to the mitochondrion-specific ribosomal protein mL37 family. Component of the mitochondrial ribosome large subunit (39S) which comprises a 16S rRNA and about 50 distinct proteins.

The protein localises to the mitochondrion. This Rattus norvegicus (Rat) protein is Large ribosomal subunit protein mL37 (Mrpl37).